The sequence spans 156 residues: Ribosomal RNA large subunit methyltransferase H (156 aa).

S-adenosyl-L-methionine-binding positions include L73, G104, and 123-128; that span reads IGPLTL.

Belongs to the RNA methyltransferase RlmH family. Homodimer.

Its subcellular location is the cytoplasm. It catalyses the reaction pseudouridine(1915) in 23S rRNA + S-adenosyl-L-methionine = N(3)-methylpseudouridine(1915) in 23S rRNA + S-adenosyl-L-homocysteine + H(+). Its function is as follows. Specifically methylates the pseudouridine at position 1915 (m3Psi1915) in 23S rRNA. The sequence is that of Ribosomal RNA large subunit methyltransferase H from Xanthomonas oryzae pv. oryzae (strain MAFF 311018).